The chain runs to 78 residues: Beta-defensin 105A (78 aa).

Positions 1–27 (MALIRKTFYFVFAVFFILVQQPSGCQA) are cleaved as a signal peptide. 3 cysteine pairs are disulfide-bonded: Cys-43–Cys-74, Cys-53–Cys-67, and Cys-57–Cys-73.

Belongs to the beta-defensin family.

The protein localises to the secreted. In terms of biological role, has antimicrobial activity. This is Beta-defensin 105A (DEFB105A) from Macaca fascicularis (Crab-eating macaque).